We begin with the raw amino-acid sequence, 353 residues long: UDP-N-acetylglucosamine--N-acetylmuramyl-(pentapeptide) pyrophosphoryl-undecaprenol N-acetylglucosamine transferase (353 aa).

Residues 14–16 (TGG), Asn126, Arg162, Ser190, Ile243, 262–267 (ALTVSE), and Gln287 contribute to the UDP-N-acetyl-alpha-D-glucosamine site.

It belongs to the glycosyltransferase 28 family. MurG subfamily.

The protein resides in the cell inner membrane. It carries out the reaction di-trans,octa-cis-undecaprenyl diphospho-N-acetyl-alpha-D-muramoyl-L-alanyl-D-glutamyl-meso-2,6-diaminopimeloyl-D-alanyl-D-alanine + UDP-N-acetyl-alpha-D-glucosamine = di-trans,octa-cis-undecaprenyl diphospho-[N-acetyl-alpha-D-glucosaminyl-(1-&gt;4)]-N-acetyl-alpha-D-muramoyl-L-alanyl-D-glutamyl-meso-2,6-diaminopimeloyl-D-alanyl-D-alanine + UDP + H(+). Its pathway is cell wall biogenesis; peptidoglycan biosynthesis. Functionally, cell wall formation. Catalyzes the transfer of a GlcNAc subunit on undecaprenyl-pyrophosphoryl-MurNAc-pentapeptide (lipid intermediate I) to form undecaprenyl-pyrophosphoryl-MurNAc-(pentapeptide)GlcNAc (lipid intermediate II). This chain is UDP-N-acetylglucosamine--N-acetylmuramyl-(pentapeptide) pyrophosphoryl-undecaprenol N-acetylglucosamine transferase, found in Vibrio atlanticus (strain LGP32) (Vibrio splendidus (strain Mel32)).